A 627-amino-acid chain; its full sequence is Membrane protein insertase YidC (627 aa).

Transmembrane regions (helical) follow at residues 3 to 23 (KNTV…SWLN), 376 to 396 (WGLI…PLAY), 450 to 470 (LPML…PTTI), 502 to 522 (FYGN…ILYI), 534 to 554 (EGMA…LFFF), and 558 to 578 (ASGL…QYMS).

Belongs to the OXA1/ALB3/YidC family. Type 1 subfamily. Interacts with the Sec translocase complex via SecD. Specifically interacts with transmembrane segments of nascent integral membrane proteins during membrane integration.

Its subcellular location is the cell inner membrane. Functionally, required for the insertion and/or proper folding and/or complex formation of integral membrane proteins into the membrane. Involved in integration of membrane proteins that insert both dependently and independently of the Sec translocase complex, as well as at least some lipoproteins. Aids folding of multispanning membrane proteins. The sequence is that of Membrane protein insertase YidC from Porphyromonas gingivalis (strain ATCC BAA-308 / W83).